The following is a 2290-amino-acid chain: Protein Ycf2 (2290 aa).

Residue 1644–1651 coordinates ATP; sequence GSIGTGRS.

This sequence belongs to the Ycf2 family.

It localises to the plastid. It is found in the chloroplast stroma. Its function is as follows. Probable ATPase of unknown function. Its presence in a non-photosynthetic plant (Epifagus virginiana) and experiments in tobacco indicate that it has an essential function which is probably not related to photosynthesis. The chain is Protein Ycf2 from Barbarea verna (Land cress).